The sequence spans 203 residues: Ras-related protein Rab-7L1 (203 aa).

Serine 33, lysine 34, histidine 35, tyrosine 36, lysine 37, and threonine 39 together coordinate GTP. The Effector region motif lies at tyrosine 36–phenylalanine 44. Threonine 71 carries the post-translational modification Phosphothreonine; by LRRK2. Serine 72 is modified (phosphoserine; by LRRK2). Residues lysine 126, valine 156, and lysine 157 each contribute to the GTP site. Residues cysteine 202 and cysteine 203 are each lipidated (S-geranylgeranyl cysteine).

The protein belongs to the small GTPase superfamily. Rab family. In terms of assembly, interacts with LRRK2 (via the N-terminus); this interaction is direct and stimulates kinase activity. Post-translationally, in case of Salmonella enterica serovar Typhimurium (S.typhimurium) infection, is proteolytically cleaved between Gly-41 and Val-42 by the GtgE viral protease encoded on the Gifsy-2 lysogen bacteriophage, which therefore prevents the recruitment of RAB29 to S.typhimurium-containing vacuoles. In contrast, no proteolytically cleavage is detected in S.typhi-infected cells. In terms of tissue distribution, ubiquitous.

The protein resides in the cell membrane. Its subcellular location is the cytoplasm. The protein localises to the perinuclear region. It localises to the golgi apparatus. It is found in the golgi apparatus membrane. The protein resides in the trans-Golgi network. Its subcellular location is the vacuole. The protein localises to the cytoskeleton. The small GTPases Rab are key regulators in vesicle trafficking. Essential for maintaining the integrity of the endosome-trans-Golgi network structure. Together with LRRK2, plays a role in the retrograde trafficking pathway for recycling proteins, such as mannose 6 phosphate receptor (M6PR), between lysosomes and the Golgi apparatus in a retromer-dependent manner. Recruits LRRK2 to the Golgi complex and stimulates LRRK2 kinase activity. Stimulates phosphorylation of RAB10 'Thr-73' by LRRK2. Regulates neuronal process morphology in the intact central nervous system (CNS). May play a role in the formation of typhoid toxin transport intermediates during Salmonella enterica serovar Typhi (S.typhi) epithelial cell infection. This Homo sapiens (Human) protein is Ras-related protein Rab-7L1 (RAB29).